Reading from the N-terminus, the 283-residue chain is Bis(5'-nucleosyl)-tetraphosphatase, symmetrical (283 aa).

This sequence belongs to the Ap4A hydrolase family.

The catalysed reaction is P(1),P(4)-bis(5'-adenosyl) tetraphosphate + H2O = 2 ADP + 2 H(+). Its function is as follows. Hydrolyzes diadenosine 5',5'''-P1,P4-tetraphosphate to yield ADP. This Pseudomonas aeruginosa (strain LESB58) protein is Bis(5'-nucleosyl)-tetraphosphatase, symmetrical.